Consider the following 201-residue polypeptide: Small ribosomal subunit protein uS4c (201 aa).

Positions 15–43 (LGALPGLTSKRPSPGSDLRNQSRSGKRSQ) are disordered. One can recognise an S4 RNA-binding domain in the interval 89 to 150 (MRLDNILFRL…EQRSRALIQK (62 aa)).

It belongs to the universal ribosomal protein uS4 family. In terms of assembly, part of the 30S ribosomal subunit. Contacts protein S5. The interaction surface between S4 and S5 is involved in control of translational fidelity.

It localises to the plastid. The protein localises to the chloroplast. In terms of biological role, one of the primary rRNA binding proteins, it binds directly to 16S rRNA where it nucleates assembly of the body of the 30S subunit. Its function is as follows. With S5 and S12 plays an important role in translational accuracy. The sequence is that of Small ribosomal subunit protein uS4c (rps4) from Ceratophyllum demersum (Rigid hornwort).